Reading from the N-terminus, the 260-residue chain is Indole-3-glycerol phosphate synthase (260 aa).

Belongs to the TrpC family.

The enzyme catalyses 1-(2-carboxyphenylamino)-1-deoxy-D-ribulose 5-phosphate + H(+) = (1S,2R)-1-C-(indol-3-yl)glycerol 3-phosphate + CO2 + H2O. It participates in amino-acid biosynthesis; L-tryptophan biosynthesis; L-tryptophan from chorismate: step 4/5. This chain is Indole-3-glycerol phosphate synthase, found in Lacticaseibacillus paracasei (strain ATCC 334 / BCRC 17002 / CCUG 31169 / CIP 107868 / KCTC 3260 / NRRL B-441) (Lactobacillus paracasei).